The primary structure comprises 385 residues: Zinc finger protein B385R (385 aa).

2 consecutive C2H2-type zinc fingers follow at residues 166–190 (LQCP…FYNH) and 168–190 (CPNC…FYNH).

The protein belongs to the asfivirus B385R family.

This African swine fever virus (isolate Tick/South Africa/Pretoriuskop Pr4/1996) (ASFV) protein is Zinc finger protein B385R.